The sequence spans 244 residues: Cell adhesion molecule CEACAM4 (244 aa).

The N-terminal stretch at 1–35 (MGPPSAAPRGGHRPWQGLLITASLLTFWHPPTTVQ) is a signal peptide. The region spanning 36-139 (FTIEALPSSA…DSDQATGQLH (104 aa)) is the Ig-like V-type domain. Over 36-155 (FTIEALPSSA…PGLPVGAVAG (120 aa)) the chain is Extracellular. Residues N57, N104, N111, and N126 are each glycosylated (N-linked (GlcNAc...) asparagine). The chain crosses the membrane as a helical span at residues 156-176 (IVTGVLVGVALVAALVCFLLL). Topologically, residues 177–244 (SRTGRASIQR…QIDHKADVVS (68 aa)) are cytoplasmic. A disordered region spans residues 186 to 215 (RDLREQPPPASTPGHGPSHRSTFSAPLPSP). The ITAM signature appears at 222–236 (YEELLYSDANIYCQI).

The protein belongs to the immunoglobulin superfamily. CEA family. As to quaternary structure, interacts through its phosphorylated ITAM domain with the SH2 domain-containing cytoplasmic proteins involved in signaling processes during phagocytosis. N-glycosylated. Post-translationally, the cytoplasmic ITAM-like sequence becomes tyrosine phosphorylated by SRC family PTKs upon ligand-mediated receptor clustering and allows to initiate phagocytosis of bound ligand. In terms of tissue distribution, granulocytes.

Its subcellular location is the membrane. Functionally, granulocyte orphan receptor that acts as an trigger efficient phagocytosis of attached particles. The sequence is that of Cell adhesion molecule CEACAM4 from Homo sapiens (Human).